The primary structure comprises 264 residues: Dehydrodolichyl diphosphate synthase complex subunit SPAC4D7.04c (264 aa).

The protein belongs to the UPP synthase family. As to quaternary structure, forms an active dehydrodolichyl diphosphate synthase complex with nus1. It depends on Mg(2+) as a cofactor.

It localises to the endoplasmic reticulum membrane. It catalyses the reaction n isopentenyl diphosphate + (2E,6E)-farnesyl diphosphate = a di-trans,poly-cis-polyprenyl diphosphate + n diphosphate. It functions in the pathway protein modification; protein glycosylation. With nus1, forms the dehydrodolichyl diphosphate synthase (DDS) complex, an essential component of the dolichol monophosphate (Dol-P) biosynthetic machinery. Adds multiple copies of isopentenyl pyrophosphate (IPP) to farnesyl pyrophosphate (FPP) to produce dehydrodolichyl diphosphate (Dedol-PP), a precursor of dolichol which is utilized as a sugar carrier in protein glycosylation in the endoplasmic reticulum (ER). The protein is Dehydrodolichyl diphosphate synthase complex subunit SPAC4D7.04c of Schizosaccharomyces pombe (strain 972 / ATCC 24843) (Fission yeast).